A 164-amino-acid chain; its full sequence is Crossover junction endodeoxyribonuclease RuvC (164 aa).

Catalysis depends on residues aspartate 7, glutamate 67, and aspartate 140. Positions 7, 67, and 140 each coordinate Mg(2+).

Belongs to the RuvC family. As to quaternary structure, homodimer which binds Holliday junction (HJ) DNA. The HJ becomes 2-fold symmetrical on binding to RuvC with unstacked arms; it has a different conformation from HJ DNA in complex with RuvA. In the full resolvosome a probable DNA-RuvA(4)-RuvB(12)-RuvC(2) complex forms which resolves the HJ. Requires Mg(2+) as cofactor.

The protein resides in the cytoplasm. It catalyses the reaction Endonucleolytic cleavage at a junction such as a reciprocal single-stranded crossover between two homologous DNA duplexes (Holliday junction).. Its function is as follows. The RuvA-RuvB-RuvC complex processes Holliday junction (HJ) DNA during genetic recombination and DNA repair. Endonuclease that resolves HJ intermediates. Cleaves cruciform DNA by making single-stranded nicks across the HJ at symmetrical positions within the homologous arms, yielding a 5'-phosphate and a 3'-hydroxyl group; requires a central core of homology in the junction. The consensus cleavage sequence is 5'-(A/T)TT(C/G)-3'. Cleavage occurs on the 3'-side of the TT dinucleotide at the point of strand exchange. HJ branch migration catalyzed by RuvA-RuvB allows RuvC to scan DNA until it finds its consensus sequence, where it cleaves and resolves the cruciform DNA. The sequence is that of Crossover junction endodeoxyribonuclease RuvC from Chloroflexus aurantiacus (strain ATCC 29364 / DSM 637 / Y-400-fl).